The sequence spans 54 residues: Ovomucoid (54 aa).

The Kazal-like domain maps to 4–54; that stretch reads VDCSDYPKPACTLEYMPLCGSDNKTYGNKCNFCNAVVDSNGTLTLSHFGKC. Intrachain disulfides connect Cys6-Cys36, Cys14-Cys33, and Cys22-Cys54. Asn43 is a glycosylation site (N-linked (GlcNAc...) asparagine).

It is found in the secreted. The sequence is that of Ovomucoid from Dendrocygna arcuata (Wandering whistling-duck).